The following is a 185-amino-acid chain: MNNQSKRLWIEPIQGSRRKSNFFFASILFGGALGFFLVGFSSYLGRNLLPLLSSQQIIFVPQGIVMCFYGIAGLFFSSYLWCTIFFNVGSGYNQIDEKTGIVCLFRWGFPGRNRRIFLRFPLKNVHMIKMEVQENLFSSRHILYMKVKGLPDIPLARTGENLNLKEMEQKAAELARFLHVSIEGF.

2 helical membrane-spanning segments follow: residues 22–42 and 57–77; these read FFFA…GFSS and IIFV…LFFS.

It belongs to the Ycf4 family.

It localises to the plastid. The protein resides in the chloroplast thylakoid membrane. Functionally, seems to be required for the assembly of the photosystem I complex. This Welwitschia mirabilis (Tree tumbo) protein is Photosystem I assembly protein Ycf4.